Reading from the N-terminus, the 156-residue chain is ATP synthase subunit b (156 aa).

Residues 7-27 traverse the membrane as a helical segment; that stretch reads FFAQMVVFFILWWVVAKFIWP.

Belongs to the ATPase B chain family. F-type ATPases have 2 components, F(1) - the catalytic core - and F(0) - the membrane proton channel. F(1) has five subunits: alpha(3), beta(3), gamma(1), delta(1), epsilon(1). F(0) has three main subunits: a(1), b(2) and c(10-14). The alpha and beta chains form an alternating ring which encloses part of the gamma chain. F(1) is attached to F(0) by a central stalk formed by the gamma and epsilon chains, while a peripheral stalk is formed by the delta and b chains.

The protein localises to the cell inner membrane. Its function is as follows. F(1)F(0) ATP synthase produces ATP from ADP in the presence of a proton or sodium gradient. F-type ATPases consist of two structural domains, F(1) containing the extramembraneous catalytic core and F(0) containing the membrane proton channel, linked together by a central stalk and a peripheral stalk. During catalysis, ATP synthesis in the catalytic domain of F(1) is coupled via a rotary mechanism of the central stalk subunits to proton translocation. Functionally, component of the F(0) channel, it forms part of the peripheral stalk, linking F(1) to F(0). This chain is ATP synthase subunit b, found in Cupriavidus necator (strain ATCC 17699 / DSM 428 / KCTC 22496 / NCIMB 10442 / H16 / Stanier 337) (Ralstonia eutropha).